Consider the following 239-residue polypeptide: Ribosomal RNA small subunit methyltransferase G (239 aa).

S-adenosyl-L-methionine contacts are provided by residues G78, F83, 129-130 (AE), and R148.

The protein belongs to the methyltransferase superfamily. RNA methyltransferase RsmG family.

The protein localises to the cytoplasm. Specifically methylates the N7 position of a guanine in 16S rRNA. The sequence is that of Ribosomal RNA small subunit methyltransferase G from Clostridium perfringens (strain SM101 / Type A).